Here is a 516-residue protein sequence, read N- to C-terminus: Serine carboxypeptidase II-3 (516 aa).

Residues 1-20 (MKCTVVALVLLVAVQCLVLG) form the signal peptide. Positions 21-77 (AGPAAAAKARRTRQGDYLNRLRGSPSSRASWESLAAVEEQTTTKAAGRPAPVAAAVE) are excised as a propeptide. 3 disulfides stabilise this stretch: Cys143–Cys391, Cys300–Cys315, and Cys339–Cys359. N-linked (GlcNAc...) asparagine glycosylation is found at Asn194 and Asn205. Residue Ser236 is part of the active site. The N-linked (GlcNAc...) asparagine glycan is linked to Asn301. Residues 342–352 (EKLVTPPIAPS) constitute a propeptide, linker peptide. Asn380 carries an N-linked (GlcNAc...) asparagine glycan. Catalysis depends on residues Asp427 and His484.

The protein belongs to the peptidase S10 family. In terms of assembly, carboxypeptidase II is a dimer, where each monomer is composed of two chains linked by a disulfide bond. In terms of processing, the linker peptide is endoproteolytically excised during enzyme maturation.

The catalysed reaction is Preferential release of a C-terminal arginine or lysine residue.. The polypeptide is Serine carboxypeptidase II-3 (CXP;2-3) (Hordeum vulgare (Barley)).